A 629-amino-acid polypeptide reads, in one-letter code: Microtubule-associated protein 70-3 (629 aa).

The disordered stretch occupies residues 1-54; the sequence is MEEGGYAFEVNNGRPTASEFGTTARISSPSLTMSSSFREGGGGGGSKGLTRRRS. Over residues 13-33 the composition is skewed to polar residues; the sequence is GRPTASEFGTTARISSPSLTM. The stretch at 75 to 375 forms a coiled coil; it reads VKVELNRLEN…ADRAAKSEAQ (301 aa). A required for targeting to microtubules region spans residues 257–493; the sequence is ILDKLHRQKV…FPLNQSSEGT (237 aa). Disordered regions lie at residues 391–421, 458–519, and 578–629; these read LRGP…LGGA, GTSR…DSVP, and AMEK…RSTQ. Over residues 393–416 the composition is skewed to polar residues; sequence GPSSSGNRSTPEGRSMSNGPSRRQ. Residues 544–592 adopt a coiled-coil conformation; it reads LRDKDEAIEMLAKKVETLTKAMEVEAKKMRREVAAMEKEVSAMRVDNKG. Positions 578-596 are enriched in basic and acidic residues; sequence AMEKEVSAMRVDNKGSDSR. Residues 603 to 613 show a composition bias toward polar residues; it reads NSKGASTTAQL.

This sequence belongs to the MAP70 family.

The protein localises to the cytoplasm. It localises to the cytoskeleton. Plant-specific protein that interact with microtubules. This Arabidopsis thaliana (Mouse-ear cress) protein is Microtubule-associated protein 70-3 (MAP70.3).